The primary structure comprises 156 residues: Endoribonuclease YbeY (156 aa).

Residues H111, H115, and H121 each contribute to the Zn(2+) site.

It belongs to the endoribonuclease YbeY family. The cofactor is Zn(2+).

The protein resides in the cytoplasm. Functionally, single strand-specific metallo-endoribonuclease involved in late-stage 70S ribosome quality control and in maturation of the 3' terminus of the 16S rRNA. The polypeptide is Endoribonuclease YbeY (Hahella chejuensis (strain KCTC 2396)).